A 663-amino-acid polypeptide reads, in one-letter code: RING finger protein 145 (663 aa).

Helical transmembrane passes span 53–73 (YLAL…LTLP), 77–97 (LVQL…HQIS), 123–143 (FTTA…VMKT), 146–166 (IWLF…VPLE), 168–188 (IVII…YFLG), 205–222 (LVQV…MSLW), 225–245 (LVVP…QIYS), 275–295 (YSLL…LTLC), 316–336 (TEGV…LQVV), 340–360 (FLLS…MLEI), 384–404 (SLCL…CQFF), 410–430 (LLII…TLFI), 460–480 (LLEF…TIFG), and 482–502 (WTVM…WLRA). Residues 81–84 (YLYF) carry the YLYF motif motif. Cysteine 537 is a catalytic residue. The RING-type; atypical zinc finger occupies 537–575 (CAICYQDMKSAVITPCSHFFHAGCLKKWLYVQETCPLCH). The segment at 607–663 (EGTEPPGQEHTPGTRIQEGSRDNNEYIARRPDNQEGAFDPKEYPHSAKDEAHPVESA) is disordered. A compositionally biased stretch (basic and acidic residues) spans 624–663 (EGSRDNNEYIARRPDNQEGAFDPKEYPHSAKDEAHPVESA).

In terms of assembly, interacts (via YLYF motif) with INSIG1 and INSIG2.

It is found in the endoplasmic reticulum membrane. It catalyses the reaction S-ubiquitinyl-[E2 ubiquitin-conjugating enzyme]-L-cysteine + [acceptor protein]-L-lysine = [E2 ubiquitin-conjugating enzyme]-L-cysteine + N(6)-ubiquitinyl-[acceptor protein]-L-lysine.. Its function is as follows. E3 ubiquitin ligase that catalyzes the direct transfer of ubiquitin from E2 ubiquitin-conjugating enzyme to a specific substrate. In response to bacterial infection, negatively regulates the phagocyte oxidative burst by controlling the turnover of the NADPH oxidase complex subunits. Promotes monoubiquitination of CYBA and 'Lys-48'-linked polyubiquitination and degradation of CYBB NADPH oxidase catalytic subunits, both essential for the generation of antimicrobial reactive oxygen species. Involved in the maintenance of cholesterol homeostasis. In response to high sterol concentrations ubiquitinates HMGCR, a rate-limiting enzyme in cholesterol biosynthesis, and targets it for degradation. The interaction with INSIG1 is required for this function. In addition, triggers ubiquitination of SCAP, likely inhibiting its transport to the Golgi apparatus and the subsequent processing/maturation of SREBPF2, ultimately down-regulating cholesterol biosynthesis. The protein is RING finger protein 145 of Homo sapiens (Human).